Consider the following 389-residue polypeptide: Protein DDI1 homolog 1 (389 aa).

Residues 109-132 (SSSSAQSAQRTRRVEQDDEGEKSM) form a disordered region. The active site involves Asp-261.

The protein belongs to the DDI1 family. As to expression, expressed in most tissues.

It is found in the cytoplasm. Its subcellular location is the nucleus. In terms of biological role, aspartic protease. Required for the cleavage and activation of transcription factors such as isoform a of the transcription factor skn-1, which in turn regulates the expression of proteasomal subunits such as rpt-3. Plays a key role in the degradation of the potassium channel slo-1, perhaps acting directly, in cleaving slo-1 upstream of the ER-associated degradation pathway (ERAD), and also indirectly, via activation of the transcription factor skn-1, which mediates proteasomal homeostasis. This is Protein DDI1 homolog 1 from Caenorhabditis elegans.